The chain runs to 158 residues: 6,7-dimethyl-8-ribityllumazine synthase (158 aa).

5-amino-6-(D-ribitylamino)uracil is bound by residues Phe23, 61–63 (SME), and 85–87 (AVI). Residue 90–91 (DT) coordinates (2S)-2-hydroxy-3-oxobutyl phosphate. Residue His93 is the Proton donor of the active site. 5-amino-6-(D-ribitylamino)uracil is bound at residue Tyr118. Residue Arg132 coordinates (2S)-2-hydroxy-3-oxobutyl phosphate.

The protein belongs to the DMRL synthase family.

It carries out the reaction (2S)-2-hydroxy-3-oxobutyl phosphate + 5-amino-6-(D-ribitylamino)uracil = 6,7-dimethyl-8-(1-D-ribityl)lumazine + phosphate + 2 H2O + H(+). Its pathway is cofactor biosynthesis; riboflavin biosynthesis; riboflavin from 2-hydroxy-3-oxobutyl phosphate and 5-amino-6-(D-ribitylamino)uracil: step 1/2. Its function is as follows. Catalyzes the formation of 6,7-dimethyl-8-ribityllumazine by condensation of 5-amino-6-(D-ribitylamino)uracil with 3,4-dihydroxy-2-butanone 4-phosphate. This is the penultimate step in the biosynthesis of riboflavin. This chain is 6,7-dimethyl-8-ribityllumazine synthase, found in Prochlorococcus marinus (strain MIT 9211).